Here is a 511-residue protein sequence, read N- to C-terminus: Histidine ammonia-lyase (511 aa).

Residues Ala142 to Gly144 constitute a cross-link (5-imidazolinone (Ala-Gly)). Ser143 is modified (2,3-didehydroalanine (Ser)).

The protein belongs to the PAL/histidase family. Contains an active site 4-methylidene-imidazol-5-one (MIO), which is formed autocatalytically by cyclization and dehydration of residues Ala-Ser-Gly.

It is found in the cytoplasm. It carries out the reaction L-histidine = trans-urocanate + NH4(+). The protein operates within amino-acid degradation; L-histidine degradation into L-glutamate; N-formimidoyl-L-glutamate from L-histidine: step 1/3. The chain is Histidine ammonia-lyase from Brucella canis (strain ATCC 23365 / NCTC 10854 / RM-666).